Reading from the N-terminus, the 409-residue chain is Casein kinase I isoform delta-B (409 aa).

The region spanning 9–277 (YRLGRKIGSG…YLRQLFRNLF (269 aa)) is the Protein kinase domain. Residues 15–23 (IGSGSFGDI) and K38 contribute to the ATP site. The active-site Proton acceptor is the D128. A compositionally biased stretch (basic and acidic residues) spans 300–315 (TAEEADRERRERDERM). The disordered stretch occupies residues 300 to 409 (TAEEADRERR…NSIPFDHHGK (110 aa)). The segment at 317 to 341 (HSRNPAARGIPAASGRPRPTQDGAP) is autoinhibitory. Composition is skewed to polar residues over residues 346–358 (TPTS…SSPR) and 380–402 (NVSS…QNSI).

The protein belongs to the protein kinase superfamily. In terms of assembly, monomer. Interacts with per1 and per2. Component of the circadian core oscillator. Autophosphorylated on serine and threonine residues.

The protein localises to the cytoplasm. It is found in the nucleus. The catalysed reaction is L-seryl-[protein] + ATP = O-phospho-L-seryl-[protein] + ADP + H(+). The enzyme catalyses L-threonyl-[protein] + ATP = O-phospho-L-threonyl-[protein] + ADP + H(+). Exhibits substrate-dependent heparin activation. Its function is as follows. Casein kinases are operationally defined by their preferential utilization of acidic proteins such as caseins as substrates. Central component of the circadian clock. May act as a negative regulator of circadian rhythmicity by phosphorylating per1 and per2, which may lead to their degradation. Participates in wnt signaling. The sequence is that of Casein kinase I isoform delta-B (csnk1db) from Danio rerio (Zebrafish).